A 75-amino-acid chain; its full sequence is RNA-binding protein KhpA (75 aa).

Positions 29–75 (SIILELKVAPEDMGKVIGKQGRIAKAIRTVIKAAAVKENKRVVVEII) constitute a KH domain.

Belongs to the KhpA RNA-binding protein family. In terms of assembly, forms a complex with KhpB.

It is found in the cytoplasm. Functionally, a probable RNA chaperone. Forms a complex with KhpB which binds to cellular RNA and controls its expression. Plays a role in peptidoglycan (PG) homeostasis and cell length regulation. The protein is RNA-binding protein KhpA of Clostridium acetobutylicum (strain ATCC 824 / DSM 792 / JCM 1419 / IAM 19013 / LMG 5710 / NBRC 13948 / NRRL B-527 / VKM B-1787 / 2291 / W).